The sequence spans 288 residues: Acetyl-coenzyme A carboxylase carboxyl transferase subunit beta (288 aa).

Residues 34 to 288 (LFAKCPGCKQ…TLLSFHGGVQ (255 aa)) form the CoA carboxyltransferase N-terminal domain. Zn(2+) contacts are provided by C38, C41, C56, and C59. A C4-type zinc finger spans residues 38-59 (CPGCKQAIYQKDLGQAKICPNC).

This sequence belongs to the AccD/PCCB family. As to quaternary structure, acetyl-CoA carboxylase is a heterohexamer composed of biotin carboxyl carrier protein (AccB), biotin carboxylase (AccC) and two subunits each of ACCase subunit alpha (AccA) and ACCase subunit beta (AccD). Zn(2+) serves as cofactor.

It localises to the cytoplasm. It catalyses the reaction N(6)-carboxybiotinyl-L-lysyl-[protein] + acetyl-CoA = N(6)-biotinyl-L-lysyl-[protein] + malonyl-CoA. Its pathway is lipid metabolism; malonyl-CoA biosynthesis; malonyl-CoA from acetyl-CoA: step 1/1. Component of the acetyl coenzyme A carboxylase (ACC) complex. Biotin carboxylase (BC) catalyzes the carboxylation of biotin on its carrier protein (BCCP) and then the CO(2) group is transferred by the transcarboxylase to acetyl-CoA to form malonyl-CoA. The protein is Acetyl-coenzyme A carboxylase carboxyl transferase subunit beta of Streptococcus thermophilus (strain ATCC BAA-491 / LMD-9).